The sequence spans 455 residues: GTPase Der (455 aa).

EngA-type G domains follow at residues 4 to 169 (PVVA…PPKD) and 178 to 353 (IQMA…EQHR). GTP-binding positions include 10 to 17 (GRPNVGKS), 57 to 61 (DTGGL), 120 to 123 (NKCE), 184 to 191 (GRPNVGKS), 231 to 235 (DTAGI), and 296 to 299 (NKWD). Residues 354–439 (RRVSTSVVNE…PLRLFWRGKQ (86 aa)) form the KH-like domain.

It belongs to the TRAFAC class TrmE-Era-EngA-EngB-Septin-like GTPase superfamily. EngA (Der) GTPase family. As to quaternary structure, associates with the 50S ribosomal subunit.

In terms of biological role, GTPase that plays an essential role in the late steps of ribosome biogenesis. The protein is GTPase Der of Synechococcus sp. (strain CC9605).